The chain runs to 368 residues: uncharacterized protein (368 aa).

5 helical membrane-spanning segments follow: residues 22 to 42 (VAGI…FTLI), 74 to 94 (FVKP…LLVL), 104 to 124 (FLKT…LNLF), 144 to 164 (VGDF…GASL), and 168 to 188 (WGVN…AVSL).

Belongs to the MscS (TC 1.A.23) family.

It is found in the cell membrane. This is an uncharacterized protein from Aquifex aeolicus (strain VF5).